The following is a 362-amino-acid chain: MLSYNRFRGYLIPQIHALKLFRYASTASTSGEKIESSERPYDVGMLLRPKTKFEIKTYKPISPGLRHLKRPVSDYLWKGKPFRPLTVAKRKKGGRNETGRITVRHQGGGHKQRIRLVDFERKVPGVHRVIRIEYDPGRSGHIALVEKLNSETANKSYILACDGLREGDTVESFRSLLKTGSNGEPVEMDPVLAAEIEDGTFAAKNLKPGNCFPLRLIPIGTVIHAIGVNPNQKAKLCRSAGSSARIIAFDGKYAIVRLQSGEERKILDTSFATIGVVSNIYWQHRQLGKAGRSRWLGIRPTVRGTAMNPCDHPHGGGGGKSIGNKPSQSPWGVLAKGGYKTRRGKNVNKLLVRDRPRGKEKR.

Residues 1 to 23 constitute a mitochondrion transit peptide; sequence MLSYNRFRGYLIPQIHALKLFRY. Residues 306–362 form a disordered region; sequence AMNPCDHPHGGGGGKSIGNKPSQSPWGVLAKGGYKTRRGKNVNKLLVRDRPRGKEKR. A compositionally biased stretch (basic and acidic residues) spans 351–362; that stretch reads LVRDRPRGKEKR.

This sequence belongs to the universal ribosomal protein uL2 family. As to quaternary structure, component of the mitochondrial large ribosomal subunit (mt-LSU). Mature yeast 74S mitochondrial ribosomes consist of a small (37S) and a large (54S) subunit. The 37S small subunit contains a 15S ribosomal RNA (15S mt-rRNA) and at least 32 different proteins. The 54S large subunit contains a 21S rRNA (21S mt-rRNA) and at least 45 different proteins. uL2m has a Na/K ligand binding site.

The protein resides in the mitochondrion. In terms of biological role, component of the mitochondrial ribosome (mitoribosome), a dedicated translation machinery responsible for the synthesis of mitochondrial genome-encoded proteins, including at least some of the essential transmembrane subunits of the mitochondrial respiratory chain. The mitoribosomes are attached to the mitochondrial inner membrane and translation products are cotranslationally integrated into the membrane. The polypeptide is Large ribosomal subunit protein uL2m (rml2) (Schizosaccharomyces pombe (strain 972 / ATCC 24843) (Fission yeast)).